An 87-amino-acid polypeptide reads, in one-letter code: Large ribosomal subunit protein eL33 (87 aa).

The protein belongs to the eukaryotic ribosomal protein eL33 family.

The sequence is that of Large ribosomal subunit protein eL33 from Pyrococcus abyssi (strain GE5 / Orsay).